The chain runs to 86 residues: Large ribosomal subunit protein bL31B (86 aa).

Belongs to the bacterial ribosomal protein bL31 family. Type B subfamily. As to quaternary structure, part of the 50S ribosomal subunit.

This chain is Large ribosomal subunit protein bL31B, found in Streptococcus uberis (strain ATCC BAA-854 / 0140J).